Here is a 106-residue protein sequence, read N- to C-terminus: Nucleoid-associated protein XOO1065 (106 aa).

Over residues 80-89 (KIDAESKDRM) the composition is skewed to basic and acidic residues. Residues 80–106 (KIDAESKDRMGSATAGMQLPPGMKLPF) are disordered.

Belongs to the YbaB/EbfC family. Homodimer.

The protein resides in the cytoplasm. It localises to the nucleoid. Binds to DNA and alters its conformation. May be involved in regulation of gene expression, nucleoid organization and DNA protection. This is Nucleoid-associated protein XOO1065 from Xanthomonas oryzae pv. oryzae (strain KACC10331 / KXO85).